The sequence spans 294 residues: Potassium-transporting ATPase subunit beta (294 aa).

Residues 1–36 lie on the Cytoplasmic side of the membrane; the sequence is MAALQEKKSCSQRMAEFRQYCWNPDTGQMLGRTPAR. The chain crosses the membrane as a helical; Signal-anchor for type II membrane protein span at residues 37-57; sequence WVWISLYYAAFYVVMTGLFAL. Over 58–294 the chain is Extracellular; it reads CIYVLMQTID…KVEFKLTIQK (237 aa). N-linked (GlcNAc...) asparagine glycosylation is found at asparagine 99, asparagine 103, asparagine 130, asparagine 146, and asparagine 161. Cysteine 131 and cysteine 152 are oxidised to a cystine. An intrachain disulfide couples cysteine 162 to cysteine 178. 2 N-linked (GlcNAc...) asparagine glycosylation sites follow: asparagine 193 and asparagine 225. An immunoglobulin-like region spans residues 194–294; that stretch reads NTAPRVDCTF…KVEFKLTIQK (101 aa). An intrachain disulfide couples cysteine 201 to cysteine 266.

This sequence belongs to the X(+)/potassium ATPases subunit beta family. In terms of assembly, the ATPase pump is composed of two subunits: alpha (catalytic) and beta (regulatory). Interacts with alpha subunit ATP12A; this interaction is required for the formation of a functionally active pump and targeting at the plasma membrane. Interacts (via N-terminus) with alpha subunit ATP4A (via the P-domain). In terms of processing, N-glycosylation is necessary for assembly and functional expression of the pump at the plasma membrane. As to expression, stomach.

The protein resides in the apical cell membrane. The protein localises to the cell membrane. The beta subunit of the gastric H(+)/K(+) ATPase pump which transports H(+) ions in exchange for K(+) ions across the apical membrane of parietal cells. Plays a structural and regulatory role in the assembly and membrane targeting of a functionally active pump. Within a transport cycle, the transfer of a H(+) ion across the membrane is coupled to ATP hydrolysis and is associated with a transient phosphorylation of the alpha subunit that shifts the pump conformation from inward-facing (E1) to outward-facing state (E2). Interacts with the phosphorylation domain of the alpha subunit and functions as a ratchet, stabilizing the lumenal-open E2 conformation and preventing the reverse reaction of the transport cycle. This chain is Potassium-transporting ATPase subunit beta (Atp4b), found in Rattus norvegicus (Rat).